We begin with the raw amino-acid sequence, 150 residues long: Viral late gene transcription factor 2 (150 aa).

The protein belongs to the chordopoxvirinae VLTF-2 family. As to quaternary structure, interacts with itself. Interacts with the late transcription factors VLTF-1.

In terms of biological role, acts with RNA polymerase to initiate transcription from late gene promoters. In Homo sapiens (Human), this protein is Viral late gene transcription factor 2 (VLTF2).